The following is a 349-amino-acid chain: Anthranilate phosphoribosyltransferase (349 aa).

5-phospho-alpha-D-ribose 1-diphosphate is bound by residues glycine 82, glycine 85 to aspartate 86, asparagine 92 to threonine 95, lysine 110 to serine 118, and serine 122. Residue glycine 82 participates in anthranilate binding. Serine 94 contributes to the Mg(2+) binding site. Asparagine 113 provides a ligand contact to anthranilate. Arginine 168 serves as a coordination point for anthranilate. The Mg(2+) site is built by aspartate 227 and glutamate 228.

It belongs to the anthranilate phosphoribosyltransferase family. As to quaternary structure, homodimer. It depends on Mg(2+) as a cofactor.

The enzyme catalyses N-(5-phospho-beta-D-ribosyl)anthranilate + diphosphate = 5-phospho-alpha-D-ribose 1-diphosphate + anthranilate. The protein operates within amino-acid biosynthesis; L-tryptophan biosynthesis; L-tryptophan from chorismate: step 2/5. Catalyzes the transfer of the phosphoribosyl group of 5-phosphorylribose-1-pyrophosphate (PRPP) to anthranilate to yield N-(5'-phosphoribosyl)-anthranilate (PRA). This Acinetobacter baumannii (strain SDF) protein is Anthranilate phosphoribosyltransferase.